A 212-amino-acid chain; its full sequence is Cyclin-dependent kinase inhibitor 3 (212 aa).

The disordered stretch occupies residues methionine 1–glutamine 24. Residues methionine 1–leucine 34 form an interaction with CDK2 region. A compositionally biased stretch (acidic residues) spans aspartate 13 to glutamine 24. The 170-residue stretch at leucine 32 to serine 201 folds into the Tyrosine-protein phosphatase domain. Catalysis depends on cysteine 140, which acts as the Phosphocysteine intermediate.

It belongs to the protein-tyrosine phosphatase family. In terms of assembly, interacts with cyclin-dependent kinases such as CDK1, CDK2 and CDK3. Does not interact with CDK4. Interacts (via C-terminus) with phosphorylated CDK2 (via C-terminal helix). Interacts with MS4A3 (via C-terminus); the interaction enhances CDKN3 enzymatic activity.

The protein resides in the cytoplasm. It is found in the perinuclear region. The catalysed reaction is O-phospho-L-tyrosyl-[protein] + H2O = L-tyrosyl-[protein] + phosphate. It carries out the reaction O-phospho-L-seryl-[protein] + H2O = L-seryl-[protein] + phosphate. It catalyses the reaction O-phospho-L-threonyl-[protein] + H2O = L-threonyl-[protein] + phosphate. Functionally, may play a role in cell cycle regulation. Dual specificity phosphatase active toward substrates containing either phosphotyrosine or phosphoserine residues. Dephosphorylates CDK2 at 'Thr-160' in a cyclin-dependent manner. This Rattus norvegicus (Rat) protein is Cyclin-dependent kinase inhibitor 3.